We begin with the raw amino-acid sequence, 489 residues long: Putative general negative regulator of transcription C16C9.04c (489 aa).

The RING-type zinc finger occupies 18 to 61 (CPLCMEEIDISDKNFKPCQCGYRVCRFCWHHIKEDLNGRCPACR). A coiled-coil region spans residues 76–109 (AEEWKMDLHRKNERKKREKERKEVELSNRKHLAN). Residues 116–198 (NLAYVNGLSP…VSDGRHLRAS (83 aa)) enclose the RRM domain. The C3H1-type zinc finger occupies 199–226 (YGTTKYCTSYLRNQQCPNPSCMYLHEPG). 2 stretches are compositionally biased toward polar residues: residues 246–261 (LSTK…HSPS) and 466–479 (ENQP…NNGN). Disordered stretches follow at residues 246 to 268 (LSTK…PFKT) and 458 to 489 (VPEQ…GFQS).

It localises to the nucleus. Its function is as follows. May negatively regulate the basal and activated transcription of many genes. In Schizosaccharomyces pombe (strain 972 / ATCC 24843) (Fission yeast), this protein is Putative general negative regulator of transcription C16C9.04c.